Consider the following 434-residue polypeptide: Pyrichalasin H cluster regulator BC2 (434 aa).

Disordered regions lie at residues 297–321 and 362–383; these read GSSPSGTPESELTSPHKRATTCSPL and HPGHEDHQQQQEEVKQHDRLSH. Over residues 298 to 309 the composition is skewed to polar residues; it reads SSPSGTPESELT. The segment covering 362–380 has biased composition (basic and acidic residues); it reads HPGHEDHQQQQEEVKQHDR.

The protein resides in the nucleus. Functionally, transcription factor probably involved in regulation of gene cluster that mediates the biosynthesis of a tyrosine-derived cytochalasan acting as a fungal signal recognized by resistant rice plants and leads to avirulence in Pi33 resistant rice cultivars. In Pyricularia oryzae (strain 70-15 / ATCC MYA-4617 / FGSC 8958) (Rice blast fungus), this protein is Pyrichalasin H cluster regulator BC2.